Here is a 334-residue protein sequence, read N- to C-terminus: Methionyl-tRNA formyltransferase (334 aa).

Position 111–114 (111–114) interacts with (6S)-5,6,7,8-tetrahydrofolate; it reads SLLP.

It belongs to the Fmt family.

It carries out the reaction L-methionyl-tRNA(fMet) + (6R)-10-formyltetrahydrofolate = N-formyl-L-methionyl-tRNA(fMet) + (6S)-5,6,7,8-tetrahydrofolate + H(+). In terms of biological role, attaches a formyl group to the free amino group of methionyl-tRNA(fMet). The formyl group appears to play a dual role in the initiator identity of N-formylmethionyl-tRNA by promoting its recognition by IF2 and preventing the misappropriation of this tRNA by the elongation apparatus. In Cyanothece sp. (strain PCC 7425 / ATCC 29141), this protein is Methionyl-tRNA formyltransferase.